The primary structure comprises 478 residues: Cytochrome c-552 (478 aa).

The signal sequence occupies residues 1-26 (MARKTLRARRFFSLIFPFFFITSVYA). His-94 contributes to the heme c binding site. 3 residues coordinate heme: Cys-122, Cys-125, and Lys-126. Heme c is bound by residues Cys-160, Cys-163, His-164, Cys-209, Cys-212, and His-213. Positions 215, 216, 261, and 263 each coordinate Ca(2+). Tyr-216 serves as a coordination point for substrate. Position 264 (His-264) interacts with substrate. Residues His-275, Cys-282, Cys-285, His-286, His-301, Cys-314, Cys-317, His-318, and His-393 each coordinate heme c.

The protein belongs to the cytochrome c-552 family. Ca(2+) serves as cofactor. Requires heme c as cofactor.

It is found in the periplasm. The enzyme catalyses 6 Fe(III)-[cytochrome c] + NH4(+) + 2 H2O = 6 Fe(II)-[cytochrome c] + nitrite + 8 H(+). It participates in nitrogen metabolism; nitrate reduction (assimilation). In terms of biological role, catalyzes the reduction of nitrite to ammonia, consuming six electrons in the process. The polypeptide is Cytochrome c-552 (Salmonella paratyphi A (strain ATCC 9150 / SARB42)).